A 483-amino-acid polypeptide reads, in one-letter code: Bifunctional protein HldE (483 aa).

Residues 1–327 (MDDALAHLPR…ACASSAQGEP (327 aa)) form a ribokinase region. 201-204 (NRKE) provides a ligand contact to ATP. Asp-272 is a catalytic residue. Residues 354 to 483 (FTNGCFDLLH…TTNLIARMNS (130 aa)) are cytidylyltransferase.

In the N-terminal section; belongs to the carbohydrate kinase PfkB family. This sequence in the C-terminal section; belongs to the cytidylyltransferase family. Homodimer.

The catalysed reaction is D-glycero-beta-D-manno-heptose 7-phosphate + ATP = D-glycero-beta-D-manno-heptose 1,7-bisphosphate + ADP + H(+). It catalyses the reaction D-glycero-beta-D-manno-heptose 1-phosphate + ATP + H(+) = ADP-D-glycero-beta-D-manno-heptose + diphosphate. It participates in nucleotide-sugar biosynthesis; ADP-L-glycero-beta-D-manno-heptose biosynthesis; ADP-L-glycero-beta-D-manno-heptose from D-glycero-beta-D-manno-heptose 7-phosphate: step 1/4. It functions in the pathway nucleotide-sugar biosynthesis; ADP-L-glycero-beta-D-manno-heptose biosynthesis; ADP-L-glycero-beta-D-manno-heptose from D-glycero-beta-D-manno-heptose 7-phosphate: step 3/4. Catalyzes the phosphorylation of D-glycero-D-manno-heptose 7-phosphate at the C-1 position to selectively form D-glycero-beta-D-manno-heptose-1,7-bisphosphate. Its function is as follows. Catalyzes the ADP transfer from ATP to D-glycero-beta-D-manno-heptose 1-phosphate, yielding ADP-D-glycero-beta-D-manno-heptose. This is Bifunctional protein HldE from Caulobacter vibrioides (strain ATCC 19089 / CIP 103742 / CB 15) (Caulobacter crescentus).